Consider the following 538-residue polypeptide: Hydroxylamine reductase (538 aa).

[4Fe-4S] cluster is bound by residues Cys-3, Cys-6, Cys-15, and Cys-21. Residues His-239, Glu-263, Cys-307, Cys-394, Cys-422, Cys-447, Glu-481, and Lys-483 each coordinate hybrid [4Fe-2O-2S] cluster. Cys-394 carries the cysteine persulfide modification.

The protein belongs to the HCP family. [4Fe-4S] cluster serves as cofactor. Requires hybrid [4Fe-2O-2S] cluster as cofactor.

It localises to the cytoplasm. It carries out the reaction A + NH4(+) + H2O = hydroxylamine + AH2 + H(+). In terms of biological role, catalyzes the reduction of hydroxylamine to form NH(3) and H(2)O. In Solidesulfovibrio magneticus (strain ATCC 700980 / DSM 13731 / RS-1) (Desulfovibrio magneticus), this protein is Hydroxylamine reductase.